The following is a 256-amino-acid chain: 1-(5-phosphoribosyl)-5-[(5-phosphoribosylamino)methylideneamino] imidazole-4-carboxamide isomerase (256 aa).

Aspartate 8 acts as the Proton acceptor in catalysis. Aspartate 129 serves as the catalytic Proton donor.

The protein belongs to the HisA/HisF family.

It is found in the cytoplasm. The enzyme catalyses 1-(5-phospho-beta-D-ribosyl)-5-[(5-phospho-beta-D-ribosylamino)methylideneamino]imidazole-4-carboxamide = 5-[(5-phospho-1-deoxy-D-ribulos-1-ylimino)methylamino]-1-(5-phospho-beta-D-ribosyl)imidazole-4-carboxamide. It functions in the pathway amino-acid biosynthesis; L-histidine biosynthesis; L-histidine from 5-phospho-alpha-D-ribose 1-diphosphate: step 4/9. The protein is 1-(5-phosphoribosyl)-5-[(5-phosphoribosylamino)methylideneamino] imidazole-4-carboxamide isomerase of Prochlorococcus marinus (strain NATL2A).